The sequence spans 600 residues: Aspartate--tRNA(Asp/Asn) ligase (600 aa).

Position 175 (E175) interacts with L-aspartate. The aspartate stretch occupies residues 199–202 (QLFK). Position 221 (R221) interacts with L-aspartate. ATP contacts are provided by residues 221 to 223 (RDE) and Q230. H453 provides a ligand contact to L-aspartate. Position 487 (E487) interacts with ATP. R494 contacts L-aspartate. Position 539–542 (539–542 (GWDR)) interacts with ATP. The tract at residues 578 to 600 (AAQRKESGIDFKPKKGPQGQKEK) is disordered. A compositionally biased stretch (basic and acidic residues) spans 580 to 590 (QRKESGIDFKP).

Belongs to the class-II aminoacyl-tRNA synthetase family. Type 1 subfamily. In terms of assembly, homodimer.

The protein resides in the cytoplasm. It catalyses the reaction tRNA(Asx) + L-aspartate + ATP = L-aspartyl-tRNA(Asx) + AMP + diphosphate. Aspartyl-tRNA synthetase with relaxed tRNA specificity since it is able to aspartylate not only its cognate tRNA(Asp) but also tRNA(Asn). Reaction proceeds in two steps: L-aspartate is first activated by ATP to form Asp-AMP and then transferred to the acceptor end of tRNA(Asp/Asn). The sequence is that of Aspartate--tRNA(Asp/Asn) ligase from Corynebacterium jeikeium (strain K411).